Consider the following 1082-residue polypeptide: uncharacterized protein (1082 aa).

The PNPLA domain occupies 50–319 (TTMTGGVSLA…LDNRPIGVLF (270 aa)). Residues 120-124 (GTSAG) carry the GXSXG motif. S122 (nucleophile) is an active-site residue. Residue D306 is the Proton acceptor of the active site. The DGA/G motif lies at 306-308 (DGG). The next 4 helical transmembrane spans lie at 959–979 (IARSTIIAGALLLVLGVAAAI), 982–1002 (VTVFGVTGLIAAGTGGLLVVL), 1012–1032 (LFALLSFSVVGAVLALATPVV), and 1057–1077 (WWHPLVVVGLIALVAIMIAAA).

It localises to the cell membrane. This is an uncharacterized protein from Mycobacterium tuberculosis (strain ATCC 25618 / H37Rv).